The following is a 261-amino-acid chain: tRNA pseudouridine synthase A (261 aa).

The active-site Nucleophile is the D51. Y109 lines the substrate pocket.

Belongs to the tRNA pseudouridine synthase TruA family. As to quaternary structure, homodimer.

The enzyme catalyses uridine(38/39/40) in tRNA = pseudouridine(38/39/40) in tRNA. Functionally, formation of pseudouridine at positions 38, 39 and 40 in the anticodon stem and loop of transfer RNAs. This chain is tRNA pseudouridine synthase A, found in Shewanella baltica (strain OS223).